Reading from the N-terminus, the 137-residue chain is Protein CTLA-2-alpha (137 aa).

A signal peptide spans 1–27 (MMVSICEQKLQHFSAVFLLILCLGMMS). A run of 2 repeats spans residues 39–41 (EWK) and 42–44 (EWK). The interval 39-44 (EWKEWK) is 2 X 3 AA tandem repeats of E-W-K. The disordered stretch occupies residues 114–137 (APDLPEYEDLGKNSYLTPGRAQPE).

This sequence to the propeptide regions of cysteine proteases.

Its subcellular location is the secreted. Functionally, not known, expressed in activated T-cell. In Mus musculus (Mouse), this protein is Protein CTLA-2-alpha (Ctla2a).